Reading from the N-terminus, the 241-residue chain is Putative ABC transporter ATP-binding protein CA_C0773 (241 aa).

Residues 2 to 241 (IKLEKVSFTY…REFLMECNII (240 aa)) form the ABC transporter domain. An ATP-binding site is contributed by 34–41 (GPNGSGKS).

This sequence belongs to the ABC transporter superfamily.

Its subcellular location is the cell membrane. Probably part of an ABC transporter complex. Responsible for energy coupling to the transport system. In Clostridium acetobutylicum (strain ATCC 824 / DSM 792 / JCM 1419 / IAM 19013 / LMG 5710 / NBRC 13948 / NRRL B-527 / VKM B-1787 / 2291 / W), this protein is Putative ABC transporter ATP-binding protein CA_C0773.